The primary structure comprises 312 residues: GDSL esterase/lipase At2g38180 (312 aa).

The first 22 residues, 1-22 (MVGPVRPQIVLFGSSIVQYSFT), serve as a signal peptide directing secretion. Asparagine 79 is a glycosylation site (N-linked (GlcNAc...) asparagine). The tract at residues 285–312 (EPPHPVSLCDHELTQNEQLEPPQPTARL) is disordered.

It belongs to the 'GDSL' lipolytic enzyme family.

It localises to the secreted. This Arabidopsis thaliana (Mouse-ear cress) protein is GDSL esterase/lipase At2g38180.